The sequence spans 688 residues: Sciellin (688 aa).

The segment covering 1–25 (MSNVTLRKMSPTGNEMKSTTQGTTR) has biased composition (polar residues). The tract at residues 1–29 (MSNVTLRKMSPTGNEMKSTTQGTTRKQQD) is disordered. An N6-acetyllysine modification is found at K83. The segment at 134–231 (QPGGSLNANT…TNRSAERNIR (98 aa)) is disordered. Residues 140–154 (NANTSNTIASTSATT) show a composition bias toward low complexity. Residues 186–195 (VHPPIPPKPS) show a composition bias toward pro residues. Repeat copies occupy residues 251 to 266 (GEEL…SLNR), 267 to 286 (NQGL…REKR), 287 to 306 (AKSL…DGKG), 307 to 326 (IQSL…NEKG), 327 to 346 (RQNL…TSRR), 347 to 366 (SEDL…NTTG), 367 to 386 (KKDL…NITR), 387 to 406 (GQSL…SNQG), 407 to 426 (SKDL…STEG), 427 to 446 (GQSL…TNQG), 447 to 465 (NQDL…KSSE), 466 to 484 (QGLD…NTDG), 485 to 504 (KQDL…NNQR), 505 to 523 (NQDL…RNNQ), 524 to 543 (SQDL…NTNR), and 544 to 563 (DQNL…NKNG). The interval 251–563 (GEELDNLIKM…NSHVSENKNG (313 aa)) is 16 X approximate tandem repeats. Phosphoserine is present on S289. The tract at residues 340-373 (MNKTSRRSEDLDNATEVNPKGHENTTGKKDLDGL) is disordered. A compositionally biased stretch (basic and acidic residues) spans 358 to 373 (PKGHENTTGKKDLDGL). S389 is subject to Phosphoserine. Positions 619–685 (DMCTYCRKPL…EPCYSKIMAK (67 aa)) constitute an LIM zinc-binding domain.

Highly expressed in esophagus. It is also expressed in keratinocytes, amniotic tissue, foreskin stratum spinosum and stratum granulosum, hair follicle and nail.

It is found in the cytoplasm. The protein localises to the membrane. In terms of biological role, may function in the assembly or regulation of proteins in the cornified envelope. The LIM domain may be involved in homotypic or heterotypic associations and may function to localize sciellin to the cornified envelope. In Homo sapiens (Human), this protein is Sciellin (SCEL).